Consider the following 146-residue polypeptide: Hemoglobin subunit beta (146 aa).

In terms of domain architecture, Globin spans 2 to 146 (PFSAHEEKLI…VAAALSVEYY (145 aa)). Heme b contacts are provided by His-63 and His-92.

The protein belongs to the globin family. Heterotetramer of two alpha chains and two beta chains. When oxygenated in vitro, exists virtually only in polymeric form. When deoxygenated, forms tetramers, octamers and larger polymers. Red blood cells.

In terms of biological role, involved in oxygen transport from the lung to the various peripheral tissues. The protein is Hemoglobin subunit beta of Paleosuchus palpebrosus (Cuvier's smooth-fronted caiman).